The sequence spans 289 residues: MRFLIVTGLSGAGKTQAMRALEDLGYFCVDNLPPVLMPKFAELVAHAENKIEKVALVVDVRGQKFFQDLDWALGELTKLGIKYEILFLEARDEVLLKRFKANRRGHPLGVRGSQILDNIKKERKFLENLRARADKVIDTSDLQPADLRNEILNYYGEEQKRSKISINIVTFGYKYGLPLDADLIMDVRFLPNPFYVKELRPLSGSDKPVYDYVFNYEVTKKFTEKFLDLIEFLMPFYQKEGKSNLVIAIGCTGGRHRSVAIANFLARTLEEKNYEVYLRHRDLEKHREE.

Position 8 to 15 (8 to 15 (GLSGAGKT)) interacts with ATP. Residue 59 to 62 (DVRG) participates in GTP binding.

This sequence belongs to the RapZ-like family.

In terms of biological role, displays ATPase and GTPase activities. The chain is Nucleotide-binding protein CHY_0272 from Carboxydothermus hydrogenoformans (strain ATCC BAA-161 / DSM 6008 / Z-2901).